The following is a 785-amino-acid chain: uncharacterized protein (785 aa).

Positions K53 to L65 are enriched in polar residues. The tract at residues K53 to I162 is disordered. Positions A66 to A79 are enriched in acidic residues. A compositionally biased stretch (polar residues) spans S81–G94. S215 carries the phosphoserine modification. 2 disordered regions span residues K571–N590 and D631–F657. Residues S575 to E584 are compositionally biased toward acidic residues. Position 667 is a phosphoserine (S667). The tract at residues D693 to G785 is disordered. Basic residues predominate over residues R725–R739. Residues F776 to G785 show a composition bias toward low complexity.

This is an uncharacterized protein from Saccharomyces cerevisiae (strain ATCC 204508 / S288c) (Baker's yeast).